The sequence spans 233 residues: Purine nucleoside phosphorylase DeoD-type (233 aa).

Residue His4 participates in a purine D-ribonucleoside binding. Phosphate contacts are provided by residues Gly20, Arg24, Arg43, and 87 to 90 (RIGT). A purine D-ribonucleoside-binding positions include 179–181 (EME) and 203–204 (SD). Asp204 (proton donor) is an active-site residue.

Belongs to the PNP/UDP phosphorylase family. In terms of assembly, homohexamer; trimer of homodimers.

The catalysed reaction is a purine D-ribonucleoside + phosphate = a purine nucleobase + alpha-D-ribose 1-phosphate. The enzyme catalyses a purine 2'-deoxy-D-ribonucleoside + phosphate = a purine nucleobase + 2-deoxy-alpha-D-ribose 1-phosphate. Its function is as follows. Catalyzes the reversible phosphorolytic breakdown of the N-glycosidic bond in the beta-(deoxy)ribonucleoside molecules, with the formation of the corresponding free purine bases and pentose-1-phosphate. The sequence is that of Purine nucleoside phosphorylase DeoD-type from Helicobacter pylori (strain ATCC 700392 / 26695) (Campylobacter pylori).